The chain runs to 115 residues: NADH-ubiquinone oxidoreductase chain 3 (115 aa).

Transmembrane regions (helical) follow at residues 3-23 (LPLA…IAFW), 55-75 (FFLV…LLPL), and 86-106 (LMLT…AYEW).

This sequence belongs to the complex I subunit 3 family. In terms of assembly, core subunit of respiratory chain NADH dehydrogenase (Complex I) which is composed of 45 different subunits. Interacts with TMEM186. Interacts with TMEM242.

It localises to the mitochondrion inner membrane. It carries out the reaction a ubiquinone + NADH + 5 H(+)(in) = a ubiquinol + NAD(+) + 4 H(+)(out). Functionally, core subunit of the mitochondrial membrane respiratory chain NADH dehydrogenase (Complex I) which catalyzes electron transfer from NADH through the respiratory chain, using ubiquinone as an electron acceptor. Essential for the catalytic activity of complex I. This is NADH-ubiquinone oxidoreductase chain 3 from Lemur catta (Ring-tailed lemur).